Consider the following 508-residue polypeptide: UDP-N-acetylmuramoyl-L-alanyl-D-glutamate--L-lysine ligase (508 aa).

Position 47 (Ser47) interacts with UDP-N-acetyl-alpha-D-muramoyl-L-alanyl-D-glutamate. 124 to 130 (GTKGKTT) is a binding site for ATP. UDP-N-acetyl-alpha-D-muramoyl-L-alanyl-D-glutamate-binding positions include 168 to 169 (TT), Ser195, and Arg203. Lys237 is modified (N6-carboxylysine). An L-lysine recognition motif motif is present at residues 425 to 428 (DDPA).

It belongs to the MurCDEF family. MurE subfamily. In terms of processing, carboxylation is probably crucial for Mg(2+) binding and, consequently, for the gamma-phosphate positioning of ATP.

It is found in the cytoplasm. The enzyme catalyses UDP-N-acetyl-alpha-D-muramoyl-L-alanyl-D-glutamate + L-lysine + ATP = UDP-N-acetyl-alpha-D-muramoyl-L-alanyl-gamma-D-glutamyl-L-lysine + ADP + phosphate + H(+). It functions in the pathway cell wall biogenesis; peptidoglycan biosynthesis. Its function is as follows. Catalyzes the addition of L-lysine to the nucleotide precursor UDP-N-acetylmuramoyl-L-alanyl-D-glutamate (UMAG) in the biosynthesis of bacterial cell-wall peptidoglycan. This chain is UDP-N-acetylmuramoyl-L-alanyl-D-glutamate--L-lysine ligase, found in Enterococcus faecalis (strain ATCC 700802 / V583).